The sequence spans 178 residues: MSRIGKLPITIPENVDINYNDSEITVKGKFGTLQTQIPTVIKITESDNILTVGLSEQTRSVRALHGLYRTLINNMVIGVSEQFEIILELKGVGYRAAVQNNEIILNLGYSHPVNIKIPNIISVEVVQNTTINLKSCDKELLGLFAANIRAWRQPEPYKGKGILYKGEQIIRKAGKSAK.

This sequence belongs to the universal ribosomal protein uL6 family. Part of the 50S ribosomal subunit.

It localises to the plastid. It is found in the chloroplast. Binds 23S rRNA. The sequence is that of Large ribosomal subunit protein uL6c (rpl6) from Phaeodactylum tricornutum (strain CCAP 1055/1).